The primary structure comprises 85 residues: ATP synthase subunit c (85 aa).

2 helical membrane passes run 20-40 and 65-85; these read LGAG…GNIF and FALT…ILFA.

This sequence belongs to the ATPase C chain family. F-type ATPases have 2 components, F(1) - the catalytic core - and F(0) - the membrane proton channel. F(1) has five subunits: alpha(3), beta(3), gamma(1), delta(1), epsilon(1). F(0) has three main subunits: a(1), b(2) and c(10-14). The alpha and beta chains form an alternating ring which encloses part of the gamma chain. F(1) is attached to F(0) by a central stalk formed by the gamma and epsilon chains, while a peripheral stalk is formed by the delta and b chains.

It is found in the cell inner membrane. F(1)F(0) ATP synthase produces ATP from ADP in the presence of a proton or sodium gradient. F-type ATPases consist of two structural domains, F(1) containing the extramembraneous catalytic core and F(0) containing the membrane proton channel, linked together by a central stalk and a peripheral stalk. During catalysis, ATP synthesis in the catalytic domain of F(1) is coupled via a rotary mechanism of the central stalk subunits to proton translocation. Its function is as follows. Key component of the F(0) channel; it plays a direct role in translocation across the membrane. A homomeric c-ring of between 10-14 subunits forms the central stalk rotor element with the F(1) delta and epsilon subunits. The sequence is that of ATP synthase subunit c from Gluconobacter oxydans (strain 621H) (Gluconobacter suboxydans).